The chain runs to 243 residues: MRLGVNIDHIATLREARKTTEPDPIKGALIAIEAGADQITLHLREDRRHIQDEDLFRLKCELKDTNIPINLEMAPTYEMQNIALEALPNNVTLVPEKRQEITTEGGLDVVSMIDYLKDFIKPIKQQGITVSLFIDPDYEQIDASVEVGADAIEIHTGEYANAYGKNVEKELERIKKAAKYAKEKGLKVYAGHGLTYQNVSEIAKIKEIEELNIGHSIIANAVFLGLYEAVKKMKEIILNARKE.

Asparagine 6 is a binding site for 3-amino-2-oxopropyl phosphate. 8–9 (DH) contacts 1-deoxy-D-xylulose 5-phosphate. Arginine 17 is a 3-amino-2-oxopropyl phosphate binding site. Histidine 42 functions as the Proton acceptor in the catalytic mechanism. Positions 44 and 49 each coordinate 1-deoxy-D-xylulose 5-phosphate. Residue glutamate 72 is the Proton acceptor of the active site. Threonine 102 lines the 1-deoxy-D-xylulose 5-phosphate pocket. The Proton donor role is filled by histidine 192. 3-amino-2-oxopropyl phosphate contacts are provided by residues glycine 193 and 214–215 (GH).

This sequence belongs to the PNP synthase family. Homooctamer; tetramer of dimers.

Its subcellular location is the cytoplasm. The enzyme catalyses 3-amino-2-oxopropyl phosphate + 1-deoxy-D-xylulose 5-phosphate = pyridoxine 5'-phosphate + phosphate + 2 H2O + H(+). Its pathway is cofactor biosynthesis; pyridoxine 5'-phosphate biosynthesis; pyridoxine 5'-phosphate from D-erythrose 4-phosphate: step 5/5. Catalyzes the complicated ring closure reaction between the two acyclic compounds 1-deoxy-D-xylulose-5-phosphate (DXP) and 3-amino-2-oxopropyl phosphate (1-amino-acetone-3-phosphate or AAP) to form pyridoxine 5'-phosphate (PNP) and inorganic phosphate. The chain is Pyridoxine 5'-phosphate synthase from Sulfurihydrogenibium sp. (strain YO3AOP1).